Consider the following 1441-residue polypeptide: Probable ubiquitin-conjugating enzyme E2 R521 (1441 aa).

The helical transmembrane segment at 20–40 threads the bilayer; it reads YIHHIIINYITNSILYFFLIM. The stretch at 63–89 forms a coiled coil; that stretch reads NQSKLVNTLDIIKDEINKWEEKNTDKD. A compositionally biased stretch (basic and acidic residues) spans 180-199; sequence VSKDKMKDKSESNSEHEQES. Disordered stretches follow at residues 180–207 and 283–305; these read VSKD…SNEI and IFGK…MSKV. Residues 286 to 303 are compositionally biased toward low complexity; it reads KSKNSGPSSSKTSISSMS. Positions 340–368 form a coiled coil; that stretch reads TTNEDNNDLDNLINEVERLVQETKDQETK. The segment covering 505 to 538 has biased composition (low complexity); that stretch reads TVEPVQEVAEEPVQQEVAEEPVQQEVAEEPVQQE. Disordered stretches follow at residues 505-554 and 577-605; these read TVEP…PVQK and NDFS…NNLG. Positions 539-549 are enriched in acidic residues; that stretch reads VAEEPVQEVAE. The UBC core domain occupies 1217-1380; it reads AISRELLSHS…VRFNCMKWAM (164 aa). The Glycyl thioester intermediate role is filled by C1306.

The protein belongs to the ubiquitin-conjugating enzyme family.

The protein resides in the membrane. It catalyses the reaction S-ubiquitinyl-[E1 ubiquitin-activating enzyme]-L-cysteine + [E2 ubiquitin-conjugating enzyme]-L-cysteine = [E1 ubiquitin-activating enzyme]-L-cysteine + S-ubiquitinyl-[E2 ubiquitin-conjugating enzyme]-L-cysteine.. It functions in the pathway protein modification; protein ubiquitination. Its function is as follows. Catalyzes the covalent attachment of ubiquitin to other proteins. This is Probable ubiquitin-conjugating enzyme E2 R521 from Acanthamoeba polyphaga (Amoeba).